Consider the following 103-residue polypeptide: UPF0145 protein BT9727_3206 (103 aa).

It belongs to the UPF0145 family.

The chain is UPF0145 protein BT9727_3206 from Bacillus thuringiensis subsp. konkukian (strain 97-27).